The primary structure comprises 545 residues: Glucose-6-phosphate isomerase (545 aa).

Residue Glu351 is the Proton donor of the active site. Residues His382 and Lys510 contribute to the active site.

This sequence belongs to the GPI family.

The protein resides in the cytoplasm. It carries out the reaction alpha-D-glucose 6-phosphate = beta-D-fructose 6-phosphate. Its pathway is carbohydrate biosynthesis; gluconeogenesis. It participates in carbohydrate degradation; glycolysis; D-glyceraldehyde 3-phosphate and glycerone phosphate from D-glucose: step 2/4. Its function is as follows. Catalyzes the reversible isomerization of glucose-6-phosphate to fructose-6-phosphate. This is Glucose-6-phosphate isomerase from Shewanella baltica (strain OS185).